The chain runs to 623 residues: Kelch repeat and BTB domain-containing protein 11 (623 aa).

Residues M1–V129 are disordered. A compositionally biased stretch (low complexity) spans P12 to A31. A compositionally biased stretch (polar residues) spans C42 to A55. S64, S67, S87, and S107 each carry phosphoserine. A compositionally biased stretch (low complexity) spans E79 to L91. In terms of domain architecture, BTB spans P140–M196. 4 Kelch repeats span residues R311–N359, Y360–G412, H413–C455, and E458–G500.

This is Kelch repeat and BTB domain-containing protein 11 (KBTBD11) from Homo sapiens (Human).